The primary structure comprises 244 residues: Phosphoadenosine 5'-phosphosulfate reductase (244 aa).

Cys-239 functions as the Nucleophile; cysteine thiosulfonate intermediate in the catalytic mechanism.

Belongs to the PAPS reductase family. CysH subfamily.

It localises to the cytoplasm. It catalyses the reaction [thioredoxin]-disulfide + sulfite + adenosine 3',5'-bisphosphate + 2 H(+) = [thioredoxin]-dithiol + 3'-phosphoadenylyl sulfate. It functions in the pathway sulfur metabolism; hydrogen sulfide biosynthesis; sulfite from sulfate: step 3/3. Functionally, catalyzes the formation of sulfite from phosphoadenosine 5'-phosphosulfate (PAPS) using thioredoxin as an electron donor. The chain is Phosphoadenosine 5'-phosphosulfate reductase from Buchnera aphidicola subsp. Acyrthosiphon pisum (strain 5A).